The primary structure comprises 545 residues: Chaperonin GroEL 1 (545 aa).

ATP is bound by residues 30–33 (TLGP), lysine 51, 87–91 (DGTTT), glycine 415, and aspartate 495.

Belongs to the chaperonin (HSP60) family. As to quaternary structure, forms a cylinder of 14 subunits composed of two heptameric rings stacked back-to-back. Interacts with the co-chaperonin GroES.

It is found in the cytoplasm. The catalysed reaction is ATP + H2O + a folded polypeptide = ADP + phosphate + an unfolded polypeptide.. In terms of biological role, together with its co-chaperonin GroES, plays an essential role in assisting protein folding. The GroEL-GroES system forms a nano-cage that allows encapsulation of the non-native substrate proteins and provides a physical environment optimized to promote and accelerate protein folding. This is Chaperonin GroEL 1 from Rhizobium etli (strain ATCC 51251 / DSM 11541 / JCM 21823 / NBRC 15573 / CFN 42).